Here is a 504-residue protein sequence, read N- to C-terminus: Cytochrome P450 4A2 (504 aa).

Positions 1-4 (MGFS) are excised as a propeptide. Residue glutamate 315 coordinates heme. Serine 434 is subject to Phosphoserine. A heme-binding site is contributed by cysteine 451.

The protein belongs to the cytochrome P450 family. Heme serves as cofactor.

Its subcellular location is the endoplasmic reticulum membrane. The protein localises to the microsome membrane. It carries out the reaction an omega-methyl-long-chain fatty acid + reduced [NADPH--hemoprotein reductase] + O2 = an omega-hydroxy-long-chain fatty acid + oxidized [NADPH--hemoprotein reductase] + H2O + H(+). It catalyses the reaction dodecanoate + reduced [NADPH--hemoprotein reductase] + O2 = (11R)-hydroxydodecanoate + oxidized [NADPH--hemoprotein reductase] + H2O + H(+). The enzyme catalyses dodecanoate + reduced [NADPH--hemoprotein reductase] + O2 = 12-hydroxydodecanoate + oxidized [NADPH--hemoprotein reductase] + H2O + H(+). The catalysed reaction is tetradecanoate + reduced [NADPH--hemoprotein reductase] + O2 = 14-hydroxytetradecanoate + oxidized [NADPH--hemoprotein reductase] + H2O + H(+). It carries out the reaction hexadecanoate + reduced [NADPH--hemoprotein reductase] + O2 = 16-hydroxyhexadecanoate + oxidized [NADPH--hemoprotein reductase] + H2O + H(+). It participates in lipid metabolism; fatty acid metabolism. Its function is as follows. A cytochrome P450 monooxygenase that catalyzes omega and omega-1 hydroxylation of saturated fatty acids. Exhibits preferential omega versus omega-1 regioselectivity and (R) versus (S) stereoselectivity for hydroxylation of lauric and myristic acids. Has low activity toward palmitic acid. Mechanistically, uses molecular oxygen inserting one oxygen atom into a substrate, and reducing the second into a water molecule, with two electrons provided by NADPH via cytochrome P450 reductase (CPR; NADPH-ferrihemoprotein reductase). This chain is Cytochrome P450 4A2, found in Rattus norvegicus (Rat).